A 717-amino-acid polypeptide reads, in one-letter code: MSGDGATEQAAEYVPEKVKKAEKKLEENPYDLDAWSTLIREAQNQPIDKARKTYERLVAQFPSSGRFWKLYIEAEIKAKNYDKVEKLFQRCLMKVLHIDLWKCYLSYVRETKGKLPSYKEKMAQAYDFALDKIGMEIMSYQIWVDYINFLKGVEAVGSYAENQRITAVRRVYQRGCVNPMINIEQLWRDYNKYEEGINIHLAKKMIEDRSRDYMNARRVAKEYETVMKGLDRNAPSVPPQNTPQEAQQVDMWKKYIQWEKSNPLRTEDQTLITKRVMFAYEQCLLVLGHHPDIWYEAAQYLEQSSKLLAEKGDMNNAKLFSDEAANIYERAISTLLKKNMLLYFAYADYEESRMKYEKVHSIYNRLLAIEDIDPTLVYIQYMKFARRAEGIKSGRMIFKKAREDTRTRHHVYVTAALMEYYCSKDKSVAFKIFELGLKKYGDIPEYVLAYIDYLSHLNEDNNTRVLFERVLTSGSLPPEKSGEIWARFLAFESNIGDLASILKVEKRRFTAFKEEYEGKETALLVDRYKFMDLYPCSASELKALGYKDVSRAKLAAIIPDPVVAPSIVPVLKDEVDRKPEYPKPDTQQMIPFQPRHLAPPGLHPVPGGVFPVPPAAVVLMKLLPPPICFQGPFVQVDELMEIFRRCKIPNTVEEAVRIITGGAPELAVEGNGPVESNAVLTKAVKRPNEDSDEDEEKGAVVPPVHDIYRARQQKRIR.

Ser-2 is modified (N-acetylserine). HAT repeat units follow at residues 45 to 77 (QPID…AEIK), 79 to 110 (KNYD…YVRE), 117 to 152 (SYKE…FLKG), 163 to 196 (QRIT…YEEG), 221 to 261 (KEYE…WEKS), 271 to 303 (LITK…YLEQ), 319 to 352 (LFSD…YEES), 354 to 387 (MKYE…FARR), and 458 to 494 (NEDN…FESN). A disordered region spans residues 684-705 (VKRPNEDSDEDEEKGAVVPPVH). Ser-691 is modified (phosphoserine).

In terms of assembly, homodimer. The CSTF complex is composed of CSTF1 (50 kDa subunit), CSTF2 (64 kDa subunit) and CSTF3 (77 kDa subunit). CSTF3 directly interacts with CSTF1 and CSTF2. Interacts with FIP1L1.

The protein resides in the nucleus. Functionally, one of the multiple factors required for polyadenylation and 3'-end cleavage of mammalian pre-mRNAs. The polypeptide is Cleavage stimulation factor subunit 3 (CSTF3) (Pongo abelii (Sumatran orangutan)).